The primary structure comprises 466 residues: Gamma-glutamylpolyamine synthetase GlnA3 (466 aa).

The GS catalytic domain maps to 127-466; the sequence is GRTVLRRIVA…GVAAAYRWKY (340 aa). 2 residues coordinate Mg(2+): glutamate 151 and glutamate 153. Glutamate 202 contributes to the ATP binding site. Mg(2+) is bound by residues glutamate 207 and glutamate 214. An L-glutamate-binding site is contributed by glycine 259. Residue histidine 263 coordinates Mg(2+). Residue serine 267 coordinates ATP. Arginine 316 and arginine 334 together coordinate L-glutamate. Residues arginine 334 and arginine 339 each contribute to the ATP site. Glutamate 355 provides a ligand contact to Mg(2+).

Belongs to the glutamine synthetase family. Requires Mg(2+) as cofactor. As to expression, expressed in mycelium.

It catalyses the reaction spermine + L-glutamate + ATP = gamma-L-glutamylspermine + ADP + phosphate + H(+). The catalysed reaction is spermidine + L-glutamate + ATP = gamma-L-glutamylspermidine + ADP + phosphate + H(+). It carries out the reaction putrescine + L-glutamate + ATP = gamma-L-glutamylputrescine + ADP + phosphate + H(+). The enzyme catalyses cadaverine + L-glutamate + ATP = gamma-L-glutamylcadaverine + ADP + phosphate + H(+). It functions in the pathway amine and polyamine degradation; putrescine degradation. The protein operates within amine and polyamine degradation; spermidine degradation. Its pathway is amine and polyamine degradation; spermine degradation. Functionally, involved in the catabolism of polyamines. Catalyzes the ATP-dependent gamma-glutamylation of polyamines. Substrates include putrescine, cadaverine, spermidine and spermine, with a preference for long-chain polyamines spermidine and spermine. Is not able to compensate for the loss of glutamine synthetases (GSs). No complementation of the L-glutamine auxotrophy of an E.coli glnA mutant. Involved in morphological differentiation and in the production of secondary metabolites. Together with GlnA2, enables survival of S.coelicolor under exposure to high local environmental polyamine concentrations, which is toxic to the cells. The chain is Gamma-glutamylpolyamine synthetase GlnA3 from Streptomyces coelicolor (strain ATCC BAA-471 / A3(2) / M145).